A 6684-amino-acid chain; its full sequence is Replicase polyprotein 1ab (6684 aa).

The 107-residue stretch at 2–108 (SSKQFKILVN…DFDLKIARTG (107 aa)) folds into the CoV Nsp1 globular domain. Positions 111 to 349 (AIYVDQYMCG…KSLVACSVKR (239 aa)) constitute a CoV Nsp2 N-terminal domain. Zn(2+) contacts are provided by C240, C242, C259, and C260. Positions 240–260 (CPCGSESSGVGDWTGFKTACC) are C4. The region spanning 378–773 (NVGLLFKKTP…CNAARNDIEI (396 aa)) is the CoV Nsp2 middle domain. Residues 768-879 (RNDIEIGGIP…VQRMYNKMGG (112 aa)) form the CoV Nsp2 C-terminal domain. Residues 882 to 983 (KTVSFSEEVD…DGIMISQYDI (102 aa)) form the Ubiquitin-like 1 domain. Residues 989-1032 (EKSEVSASSEEEEVESVEEDPENEIVEASEGAEGTSSQEEVETV) form a disordered region. The span at 997-1015 (SEEEEVESVEEDPENEIVE) shows a compositional bias: acidic residues. A Peptidase C16 1 domain is found at 1055–1299 (PWAAAVDVQE…FKVEKVEQQP (245 aa)). C1093 serves as the catalytic For PL1-PRO activity. The C4-type 1; degenerate zinc-finger motif lies at 1164-1195 (CGCGEKEIVLERAVFKLTPLKESFNYGVCGDC). Active-site for PL1-PRO activity residues include H1244 and D1257. In terms of domain architecture, Macro spans 1318–1489 (NDDLILPFYK…TIENFFSCSI (172 aa)). Residues 1486-1542 (SCSIPVNVTEDNVNHERVSVSFDKTYGEQLKGTVVIKDKDVTNQLPSAFDVGQKVIK) form the Ubiquitin-like 2 domain. The region spanning 1550-1803 (AHYGFRDAAA…KVAASPKIVQ (254 aa)) is the Peptidase C16 2 domain. The For PL2-PRO activity role is filled by C1588. Residues C1667, C1670, C1694, and H1696 each contribute to the Zn(2+) site. Residues 1667-1696 (CDKCAKVEKFVGPVVAAPLAIHGTDETCVH) form a C4-type 2; atypical zinc finger. Catalysis depends on for PL2-PRO activity residues H1741 and D1754. Residues 1896–1916 (LVLLLIAIYNFFYLFVSIPVV) form a helical membrane-spanning segment. The tract at residues 1896–2053 (LVLLLIAIYN…LALKHIVFAC (158 aa)) is HD1. Residues 1905–1970 (NFFYLFVSIP…LQVTWDFKSD (66 aa)) form the 3Ecto domain. Disulfide bonds link C1921–C1948 and C1939–C1945. 2 consecutive transmembrane segments (helical) span residues 1995-2015 (CFLMYFVSQYLNLWLSYFGYV) and 2033-2053 (FVIVVIVVKAVLALKHIVFAC). Residues 2044 to 2134 (LALKHIVFAC…SVKQTVYATD (91 aa)) are Y1. The 341-residue stretch at 2044–2384 (LALKHIVFAC…PYERFTESVS (341 aa)) folds into the CoV Nsp3 Y domain. Zn(2+)-binding residues include H2048, C2053, C2058, C2061, C2094, H2097, C2101, and C2104. The tract at residues 2048-2061 (HIVFACSNPSCKTC) is ZF1. A ZF2 region spans residues 2094–2104 (CKKHNFYCKNC). The interval 2135 to 2224 (RSHQEVTKVE…IVNSDLLEDL (90 aa)) is Y2. The coV-Y stretch occupies residues 2135–2384 (RSHQEVTKVE…PYERFTESVS (250 aa)). Positions 2225 to 2281 (SVDFKGALFNAKKNVIKNSFNVDVSECKNLDECYRACNLNVSFSTFEMAVNNAHRFG) are Y3. The tract at residues 2282–2384 (ILITDRSFNN…PYERFTESVS (103 aa)) is Y4. 8 helical membrane passes run 2401–2421 (IVILVFVFIFICGLCSVYSVA), 2467–2487 (YGFIPTFGKSCPIVVGTVFDL), 2497–2517 (PAYVSIVGRSLVFAINAAFGV), 2538–2558 (CVFNTACTTLTGLGGTIVYCA), 2666–2686 (GAMLVNIIIACLAIAMCYGVL), 2695–2715 (CTFLIVMIIVTLVVNNVSYFV), 2721–2741 (FMIIYAIVYYFITRKLAYPGI), and 2746–2766 (FIIAYINMAPWYVITAYILVF). Residues 2401–2766 (IVILVFVFIF…YVITAYILVF (366 aa)) are HD2. One can recognise a Nsp4C domain in the interval 2783-2878 (LFEGDKFVGN…PTVSVNSTLQ (96 aa)). The Peptidase C30 domain occupies 2879 to 3180 (SGLRKMAQPS…IRQMYGVNLQ (302 aa)). Catalysis depends on for 3CL-PRO activity residues H2919 and C3022. 8 consecutive transmembrane segments (helical) span residues 3187–3207 (FFYPIMTAMTILFAFWLEFFM), 3217–3237 (TFVSIVLAVTTLISTVFVSGI), 3242–3262 (LFFMSFVLPSVILVTAHNLFW), 3280–3300 (MFLPVDMQGVMLTVFCFIVFV), 3313–3333 (WFSLAVTTILVIFNMVKIFGT), 3347–3367 (FVNMLTMIVSLTTKDWMVVIA), 3371–3391 (IAYYIVVCVMPSAFVSDFGFM), and 3394–3414 (ISIVYMACGYLFCCYYGILYW). Residues 3187–3414 (FFYPIMTAMT…FCCYYGILYW (228 aa)) are HD3. In terms of domain architecture, RdRp Nsp7 cofactor spans 3475–3557 (SKLTEMKCTN…SYFENTTILQ (83 aa)). The RdRp Nsp8 cofactor domain maps to 3558–3752 (SVASAYAALP…ITCERTTKLQ (195 aa)). The region spanning 3753-3863 (NNEIMPGKLK…GYIGATVRLQ (111 aa)) is the Nsp9 ssRNA-binding domain. Positions 3864–4004 (AGKPTEHPSN…TSMQSFTVDQ (141 aa)) constitute an ExoN/MTase coactivator domain. 8 residues coordinate Zn(2+): C3937, C3940, H3946, C3953, C3979, C3982, C3990, and C3992. 2 zinc fingers span residues 3937–3953 (CIYCRCHVEHPAIDGLC) and 3979–3992 (CVVCGCWLNNGCMC). Residues 4006–4255 (YLNRVRGSSA…ESENFVKSDI (250 aa)) enclose the NiRAN domain. The Nsp12 Interface domain occupies 4261 to 4359 (KQYDLLAYDF…WNLDVKLDTM (99 aa)). Zn(2+)-binding residues include H4290, C4296, C4301, C4305, and C4482. Positions 4360–4927 (KLSMTDLLRF…SLYEKSTVLQ (568 aa)) constitute a Nsp12 RNA-dependent RNA polymerase domain. Residues 4362–4576 (SMTDLLRFVT…HQKHLKSIAA (215 aa)) are rdRp Fingers N-ter. Residues 4577-4615 (TRNATVVIGSTKFYGGWDNMLKNLMRDVDNGCLMGWDYP) are rdRp Palm N-ter. In terms of domain architecture, RdRp catalytic spans 4607–4769 (GCLMGWDYPK…CYNKDYADLG (163 aa)). The segment at 4616–4674 (KCDRALPNMIRMASAMILGSKHVGCCTHNDRFYRLSNELAQVLTEVVHCTGGFYFKPGG) is rdRp Fingers C-ter. Zn(2+) is bound by residues H4637, C4640, and C4641. A rdRp Palm C-ter region spans residues 4675-4810 (TTSGDGTTAY…SVGPHEFCSQ (136 aa)). Active-site residues include S4754, D4755, and D4756. The rdRp Thumb stretch occupies residues 4811–4927 (HTLQIVGPDG…SLYEKSTVLQ (117 aa)). Positions 4928–5040 (AAGMCVVCGS…EDFNKLAVSD (113 aa)) constitute a CV ZBD domain. Residues C4932, C4935, C4943, C4946, C4953, C4956, H4960, H4966, C4977, C4982, C4999, and H5002 each contribute to the Zn(2+) site. A (+)RNA virus helicase ATP-binding domain is found at 5175–5366 (NTISKLYPVF…MCTLGPDVFL (192 aa)). An ATP-binding site is contributed by 5210–5217 (GPPGSGKS). In terms of domain architecture, (+)RNA virus helicase C-terminal spans 5367 to 5536 (HKCYRCPAEI…AKPETCGLFK (170 aa)). Positions 5598 to 5812 (LFCTRDFAMR…RCLAIHDCFV (215 aa)) constitute an ExoN domain. Catalysis depends on residues D5616, E5618, and E5717. Zn(2+)-binding residues include C5733, C5735, C5751, H5754, H5782, C5786, and H5789. Residues H5793 and D5798 contribute to the active site. A Zn(2+)-binding site is contributed by C5804. Residues 5821 to 6042 (YPFIDNEEKI…MLWHGFVNSK (222 aa)) form the N7-MTase domain. Residue 5856–5862 (DVGNPKG) participates in S-adenosyl-L-methionine binding. Positions 5933-5947 (CNGGALYVNNHAFHT) are gpppA-binding. Positions 5971, 5988, 5999, and 6002 each coordinate Zn(2+). Residues 6046 to 6106 (SLENVAFNVV…NVAFELYAKR (61 aa)) form the Nsp15 N-terminal oligomerization domain. The AV-Nsp11N/CoV-Nsp15M domain maps to 6107-6224 (KLGLTPPLTI…IYVRKNGEYV (118 aa)). Residues 6241 to 6381 (KPRSTMEEDF…ENSHIKTFYP (141 aa)) enclose the NendoU domain. Active-site residues include H6271, H6286, K6327, K6429, D6513, K6553, and E6586. A Nidovirus-type SAM-dependent 2'-O-MTase domain is found at 6385–6681 (SAEWNPGYSM…KLLNFGNHFV (297 aa)).

The protein belongs to the coronaviruses polyprotein 1ab family. 3CL-PRO exists as monomer and homodimer. Eight copies of nsp7 and eight copies of nsp8 assemble to form a heterohexadecamer. Nsp9 is a dimer. Nsp10 forms a dodecamer. Mn(2+) is required as a cofactor. Post-translationally, specific enzymatic cleavages in vivo by its own proteases yield mature proteins. 3CL-PRO is autocatalytically processed.

The protein resides in the host membrane. It localises to the host cytoplasm. Its subcellular location is the host perinuclear region. It is found in the host endoplasmic reticulum-Golgi intermediate compartment. The catalysed reaction is Thiol-dependent hydrolysis of ester, thioester, amide, peptide and isopeptide bonds formed by the C-terminal Gly of ubiquitin (a 76-residue protein attached to proteins as an intracellular targeting signal).. The enzyme catalyses RNA(n) + a ribonucleoside 5'-triphosphate = RNA(n+1) + diphosphate. It catalyses the reaction ATP + H2O = ADP + phosphate + H(+). It carries out the reaction a 5'-end diphospho-ribonucleoside in mRNA + GTP + H(+) = a 5'-end (5'-triphosphoguanosine)-ribonucleoside in mRNA + diphosphate. The catalysed reaction is a 5'-end (N(7)-methyl 5'-triphosphoguanosine)-ribonucleoside in mRNA + S-adenosyl-L-methionine = a 5'-end (N(7)-methyl 5'-triphosphoguanosine)-(2'-O-methyl-ribonucleoside) in mRNA + S-adenosyl-L-homocysteine + H(+). The enzyme catalyses uridylyl-uridylyl-ribonucleotide-RNA = a 3'-end uridylyl-2',3'-cyclophospho-uridine-RNA + a 5'-end dephospho-ribonucleoside-RNA. Its function is as follows. The replicase polyprotein of coronaviruses is a multifunctional protein: it contains the activities necessary for the transcription of negative stranded RNA, leader RNA, subgenomic mRNAs and progeny virion RNA as well as proteinases responsible for the cleavage of the polyprotein into functional products. Non-structural protein 1 inhibits host translation. By suppressing host gene expression, nsp1 facilitates efficient viral gene expression in infected cells and evasion from host immune response. Functionally, the papain-like proteinase 1 (PLP1) and papain-like proteinase 2 (PLP2) are responsible for the cleavages located at the N-terminus of the replicase polyprotein. In addition, PLP2 possesses a deubiquitinating/deISGylating activity and processes both 'Lys-48'- and 'Lys-63'-linked polyubiquitin chains from cellular substrates. PLP2 also antagonizes innate immune induction of type I interferon by blocking the nuclear translocation of host IRF-3. In terms of biological role, responsible for the majority of cleavages as it cleaves the C-terminus of replicase polyprotein at 11 sites. Recognizes substrates containing the core sequence [ILMVF]-Q-|-[SAGC]. Inhibited by the substrate-analog Cbz-Val-Asn-Ser-Thr-Leu-Gln-CMK. Its function is as follows. The helicase which contains a zinc finger structure displays RNA and DNA duplex-unwinding activities with 5' to 3' polarity. ATPase activity is strongly stimulated by poly(U), poly(dT), poly(C), poly(dA), but not by poly(G). The exoribonuclease acts on both ssRNA and dsRNA in a 3' to 5' direction. Functionally, nsp7-nsp8 hexadecamer may possibly confer processivity to the polymerase, maybe by binding to dsRNA or by producing primers utilized by the latter. In terms of biological role, forms a primer, NSP9-pU, which is utilized by the polymerase for the initiation of RNA chains. Interacts with ribosome signal recognition particle RNA (SRP). Together with NSP8, suppress protein integration into the cell membrane, thereby disrupting host immune defenses. Its function is as follows. RNA-directed RNA polymerase that catalyzes the transcription of viral genomic and subgenomic RNAs. Acts in complex with nsp7 and nsp8 to transcribe both the minus and positive strands of genomic RNA. The kinase-like NiRAN domain of NSP12 attaches one or more nucleotides to the amino terminus of NSP9, forming a covalent RNA-protein intermediate that serves as transcription/replication primer. Subgenomic RNAs (sgRNAs) are formed by discontinuous transcription: The polymerase has the ability to pause at transcription-regulating sequences (TRS) and jump to the leader TRS, resulting in a major deletion. This creates a series of subgenomic RNAs that are replicated, transcribed and translated. In addition, Nsp12 is a subunit of the viral RNA capping enzyme that catalyzes the RNA guanylyltransferase reaction for genomic and sub-genomic RNAs. Subsequently, the NiRAN domain transfers RNA to GDP, and forms the core cap structure GpppA-RNA. Plays a role in viral transcription/replication and prevents the simultaneous activation of host cell dsRNA sensors, such as MDA5/IFIH1, OAS, and PKR. Acts by degrading the 5'-polyuridines generated during replication of the poly(A) region of viral genomic and subgenomic RNAs. Catalyzes a two-step reaction in which a 2'3'-cyclic phosphate (2'3'-cP) is first generated by 2'-O transesterification, which is then hydrolyzed to a 3'-phosphate (3'-P). If not degraded, poly(U) RNA would hybridize with poly(A) RNA tails and activate host dsRNA sensors. This is Replicase polyprotein 1ab (rep) from Sus scrofa (Pig).